The sequence spans 287 residues: Immunoglobulin alpha Fc receptor (287 aa).

A signal peptide spans Met1–Ala21. Residues Gln22–Asn227 are Extracellular-facing. Ig-like C2-type domains lie at Asp42–Tyr107 and Gly139–Ser200. Residues Cys49 and Cys100 are joined by a disulfide bond. N-linked (GlcNAc...) asparagine glycans are attached at residues Asn65, Asn79, Asn141, Asn177, and Asn186. Cys146 and Cys193 are disulfide-bonded. The helical transmembrane segment at Leu228–Val246 threads the bilayer. Topologically, residues Glu247–Lys287 are cytoplasmic.

In terms of assembly, associates with the Fc epsilon RI gamma 2 receptor inducing tyrosine phosphorylation of gamma 2. (Microbial infection) Interacts with Staphylococcus aureus protein SSL11. In terms of tissue distribution, isoform A.1, isoform A.2 and isoform A.3 are differentially expressed between blood and mucosal myeloid cells. Isoform A.1, isoform A.2 and isoform A.3 are expressed in monocytes. Isoform A.1 and isoform A.2 are expressed in alveolar macrophages; however only one isoform is expressed at alveolar macrophages surfaces.

Its subcellular location is the cell membrane. The protein localises to the secreted. Binds to the Fc region of immunoglobulins alpha. Mediates several functions including cytokine production. The sequence is that of Immunoglobulin alpha Fc receptor (FCAR) from Homo sapiens (Human).